Here is a 136-residue protein sequence, read N- to C-terminus: Histone H3 (136 aa).

Belongs to the histone H3 family. In terms of assembly, the nucleosome is a histone octamer containing two molecules each of H2A, H2B, H3 and H4 assembled in one H3-H4 heterotetramer and two H2A-H2B heterodimers. The octamer wraps approximately 147 bp of DNA.

Its subcellular location is the nucleomorph. The protein resides in the chromosome. Its function is as follows. Core component of nucleosome. Nucleosomes wrap and compact DNA into chromatin, limiting DNA accessibility to the cellular machineries which require DNA as a template. Histones thereby play a central role in transcription regulation, DNA repair, DNA replication and chromosomal stability. DNA accessibility is regulated via a complex set of post-translational modifications of histones, also called histone code, and nucleosome remodeling. The sequence is that of Histone H3 from Guillardia theta (Cryptophyte).